The sequence spans 398 residues: Galactose-3-O-sulfotransferase 2 (398 aa).

At 1–10 the chain is on the cytoplasmic side; that stretch reads MMSMLGGLQR. The helical; Signal-anchor for type II membrane protein transmembrane segment at 11–31 threads the bilayer; the sequence is YFRVILLLLLALTLLLLAGFL. Residues 32 to 398 are Lumenal-facing; the sequence is HSDLELDTPL…PLKNIPFLGA (367 aa). N-linked (GlcNAc...) asparagine glycans are attached at residues Asn79, Asn132, Asn179, Asn287, Asn330, and Asn360.

It belongs to the galactose-3-O-sulfotransferase family. In terms of tissue distribution, ubiquitous. Detected in heart, stomach, colon, liver and spleen, in epithelial cells lining the lower to middle layer of the crypts in colonic mucosa, hepatocytes surrounding the central vein of the liver, extravillous cytotrophoblasts in the basal plate of the septum of the placenta, renal tubules of the kidney, and neuronal cells of the cerebral cortex.

Its subcellular location is the golgi apparatus. The protein localises to the golgi stack membrane. It participates in protein modification; carbohydrate sulfation. With respect to regulation, strongly inhibited by Cu(2+) and Zn(2+). Its function is as follows. Transfers a sulfate group to the hydroxyl group at C3 of non-reducing beta-galactosyl residues. Acts both on type 1 (Gal-beta-1,3-GlcNAc) and type 2 (Gal-beta-1,4-GlcNAc) chains with similar efficiency. This chain is Galactose-3-O-sulfotransferase 2 (GAL3ST2), found in Homo sapiens (Human).